A 583-amino-acid polypeptide reads, in one-letter code: MPRGLELLIAQTILQGFDAQYGRFLEVTSGAQQRFEQADWHAVQQAMKSRIHLYDHHVGLVVEQLRCITDGKSTDADFLLRVKEHYTRLLPDYPRFEIAESFFNSVYCRLFDHRSLTPERLFIFSSQPERRFRTIPRPLAKDFFPDHGWEPLLMRILSDLPLRLPWQNKSRDIRYIIAHLTETLGEDALPRCHVQVANELFYRNKAAWLVGKLTTPDGTLPFLLPIHRTDEGELFVDTCLTTTAEASIVFGFARSYFMVYAPLLAALVEWLREILPGKTTAELYMAIGCQKHAKTESYREYLCYLAESDEKFIEAPGIRGMVMLVFTLPGFDRVFKIIKDKFAPQKEMSAAHVRACYQLVKEHDRVGRMADTQEFENFVLDKRQIDPALMALLRQEVPEKITDLGEHIVIRHLYIERRMVPLNIWLEQVEGQQLRDAIEEYGNAIRQLAAANIFPGDMLFKNFGVTRHGRVVFYDYDEICYMTEVNFRDIPPARYPEDELASEPWYSVSPGDVFPEEFRHWLCADPRIGPLFEEMHADLFRADYWRALQTRIKEGHVEDVYAYRRRQRFSVRYGAISSTANSS.

ATP contacts are provided by residues 315–321 (APGIRGM) and Lys-336. The active site involves Asp-371.

Belongs to the AceK family.

The protein localises to the cytoplasm. It catalyses the reaction L-seryl-[isocitrate dehydrogenase] + ATP = O-phospho-L-seryl-[isocitrate dehydrogenase] + ADP + H(+). Bifunctional enzyme which can phosphorylate or dephosphorylate isocitrate dehydrogenase (IDH) on a specific serine residue. This is a regulatory mechanism which enables bacteria to bypass the Krebs cycle via the glyoxylate shunt in response to the source of carbon. When bacteria are grown on glucose, IDH is fully active and unphosphorylated, but when grown on acetate or ethanol, the activity of IDH declines drastically concomitant with its phosphorylation. The sequence is that of Isocitrate dehydrogenase kinase/phosphatase from Salmonella gallinarum (strain 287/91 / NCTC 13346).